The chain runs to 469 residues: MIAFLFYKCFAKNYKINFLYKNSSYINTNTLWLKVIYIKTKDVIIFLLLFFVAFNVSSAYVIKNLNIDCIVTPDDTINETISFVIYNNEDKNLSHISYTIPQTIRNFTINASAGVKGYSALYNEGVTEIAIEFEKPIPKGGYTNITINCFVNDAIWTKNGIKQLILSFPITSKNATIKIVLPPGAVILSPQGTLLVTPSGYKITTDGKHQIIVWDLSLNKEITFTITVKYTFISYPGQNIIEQPAINNNLKYLLIIAIFGTAIFGGLFVKEKISKRKIIERTKNIKNELTSLKNKLKEKEEEIKNLAIKIKDLEDKLSKANKNLLNKDEIISVLNERISEYESQIQKLLDENIIYKEKIESLNKYIETLKKENDKLKDKVRELSDIAKKYMEEKRGVLWSFLTEDEKIIIDLIKKHGHITQKEIVEITGMSKPKVSRIISELEDRKIIRKEKIGRINKLTLTEESKKLL.

3 helical membrane-spanning segments follow: residues 42 to 62, 179 to 199, and 249 to 269; these read DVII…AYVI, IVLP…VTPS, and NLKY…GLFV.

Its subcellular location is the cell membrane. This is an uncharacterized protein from Methanocaldococcus jannaschii (strain ATCC 43067 / DSM 2661 / JAL-1 / JCM 10045 / NBRC 100440) (Methanococcus jannaschii).